Reading from the N-terminus, the 142-residue chain is Large ribosomal subunit protein uL13 (142 aa).

The protein belongs to the universal ribosomal protein uL13 family. In terms of assembly, part of the 50S ribosomal subunit.

In terms of biological role, this protein is one of the early assembly proteins of the 50S ribosomal subunit, although it is not seen to bind rRNA by itself. It is important during the early stages of 50S assembly. This chain is Large ribosomal subunit protein uL13, found in Psychrobacter sp. (strain PRwf-1).